The following is a 214-amino-acid chain: Probable transaldolase (214 aa).

Residue lysine 83 is the Schiff-base intermediate with substrate of the active site.

The protein belongs to the transaldolase family. Type 3B subfamily.

It localises to the cytoplasm. It catalyses the reaction D-sedoheptulose 7-phosphate + D-glyceraldehyde 3-phosphate = D-erythrose 4-phosphate + beta-D-fructose 6-phosphate. It participates in carbohydrate degradation; pentose phosphate pathway; D-glyceraldehyde 3-phosphate and beta-D-fructose 6-phosphate from D-ribose 5-phosphate and D-xylulose 5-phosphate (non-oxidative stage): step 2/3. Transaldolase is important for the balance of metabolites in the pentose-phosphate pathway. This is Probable transaldolase from Clostridium botulinum (strain Alaska E43 / Type E3).